The sequence spans 403 residues: Serine/threonine transporter SstT (403 aa).

9 consecutive transmembrane segments (helical) span residues 16–36 (QIVIGLIAGIALALLAPAIAL), 45–65 (FVSALKAVAPVLVFILVMASI), 79–99 (ILWLYLLGTFSAAVVAVVASM), 138–158 (ALLNANFIGVLTWAIGLGVAL), 175–195 (GVTLIVRVVIRFAPLGIFGLV), 214–234 (LAVLIGCMLFVALVMNPLIVF), 295–315 (MAGAAITITVLTLAAVHTLGI), 327–347 (MVAAVCACGASGVAGGSLLLI), and 353–373 (LFGIPSEIAMQVVAVGFIIGV).

Belongs to the dicarboxylate/amino acid:cation symporter (DAACS) (TC 2.A.23) family.

Its subcellular location is the cell inner membrane. It carries out the reaction L-serine(in) + Na(+)(in) = L-serine(out) + Na(+)(out). The catalysed reaction is L-threonine(in) + Na(+)(in) = L-threonine(out) + Na(+)(out). Functionally, involved in the import of serine and threonine into the cell, with the concomitant import of sodium (symport system). This chain is Serine/threonine transporter SstT, found in Pseudomonas putida (strain W619).